The sequence spans 395 residues: Phosphopentomutase (395 aa).

Positions 16, 289, 294, 330, 331, and 342 each coordinate Mn(2+).

The protein belongs to the phosphopentomutase family. Mn(2+) is required as a cofactor.

Its subcellular location is the cytoplasm. It catalyses the reaction 2-deoxy-alpha-D-ribose 1-phosphate = 2-deoxy-D-ribose 5-phosphate. It carries out the reaction alpha-D-ribose 1-phosphate = D-ribose 5-phosphate. Its pathway is carbohydrate degradation; 2-deoxy-D-ribose 1-phosphate degradation; D-glyceraldehyde 3-phosphate and acetaldehyde from 2-deoxy-alpha-D-ribose 1-phosphate: step 1/2. Functionally, isomerase that catalyzes the conversion of deoxy-ribose 1-phosphate (dRib-1-P) and ribose 1-phosphate (Rib-1-P) to deoxy-ribose 5-phosphate (dRib-5-P) and ribose 5-phosphate (Rib-5-P), respectively. In Geobacillus kaustophilus (strain HTA426), this protein is Phosphopentomutase.